The primary structure comprises 134 residues: Small ribosomal subunit protein uS12 (134 aa).

The tract at residues 1-26 (MPTIQQLVRKGRESFADKSKSPALNS) is disordered. A compositionally biased stretch (basic and acidic residues) spans 10–20 (KGRESFADKSK). Position 89 is a 3-methylthioaspartic acid (Asp89). The segment at 103 to 134 (DTAGVNGRTQRRSKYGAKRPKPGQAPAAKGKK) is disordered. Over residues 111–123 (TQRRSKYGAKRPK) the composition is skewed to basic residues. Residues 124–134 (PGQAPAAKGKK) are compositionally biased toward low complexity.

This sequence belongs to the universal ribosomal protein uS12 family. Part of the 30S ribosomal subunit. Contacts proteins S8 and S17. May interact with IF1 in the 30S initiation complex.

Functionally, with S4 and S5 plays an important role in translational accuracy. Interacts with and stabilizes bases of the 16S rRNA that are involved in tRNA selection in the A site and with the mRNA backbone. Located at the interface of the 30S and 50S subunits, it traverses the body of the 30S subunit contacting proteins on the other side and probably holding the rRNA structure together. The combined cluster of proteins S8, S12 and S17 appears to hold together the shoulder and platform of the 30S subunit. The polypeptide is Small ribosomal subunit protein uS12 (Porphyromonas gingivalis (strain ATCC BAA-308 / W83)).